A 326-amino-acid polypeptide reads, in one-letter code: MKPSIVLYKSIPTDLHQRLAQHFTVNSFDGLTPDNQPELLAALQQAEGLIGSGGKIDQDFLQLAPNLRAASTISVGYDNFDVEALSQRGIALMHTPTVLTETVADTMMALMLSTARRVVELAERVKAGEWQESIGDDWFGVDVHHKTIGILGMGRIGMALAQRAHFGFSMPVLYTSRRPHEAAEQRFGARHCSLDTLLAEADFLCITLPMTEQTYHMIGREQLAKMKSSAILINAGRGPVVDEQTLIAALQDGTIHAAGLDVFEQEPLPVDSPLLTLRNVVAVPHIGSATHETRYNMAACAVDNLINALTGTVKENCVNPQVLITH.

Residues R237 and E266 contribute to the active site. H285 acts as the Proton donor in catalysis.

This sequence belongs to the D-isomer specific 2-hydroxyacid dehydrogenase family. GhrB subfamily. In terms of assembly, homodimer.

It localises to the cytoplasm. It catalyses the reaction glycolate + NADP(+) = glyoxylate + NADPH + H(+). It carries out the reaction (R)-glycerate + NAD(+) = 3-hydroxypyruvate + NADH + H(+). The catalysed reaction is (R)-glycerate + NADP(+) = 3-hydroxypyruvate + NADPH + H(+). Catalyzes the NADPH-dependent reduction of glyoxylate and hydroxypyruvate into glycolate and glycerate, respectively. This chain is Glyoxylate/hydroxypyruvate reductase B, found in Yersinia pestis bv. Antiqua (strain Nepal516).